A 429-amino-acid chain; its full sequence is Adenylosuccinate synthetase (429 aa).

GTP-binding positions include 12–18 and 40–42; these read GDEGKGK and GHT. Asp-13 serves as the catalytic Proton acceptor. Mg(2+) is bound by residues Asp-13 and Gly-40. IMP contacts are provided by residues 13 to 16, 38 to 41, Thr-128, Arg-142, Gln-223, Thr-238, and Arg-302; these read DEGK and NAGH. The Proton donor role is filled by His-41. 298-304 contributes to the substrate binding site; sequence VNTGRPR. GTP is bound by residues Arg-304, 330-332, and 412-414; these read KLD and GVG.

The protein belongs to the adenylosuccinate synthetase family. Homodimer. Mg(2+) is required as a cofactor.

It is found in the cytoplasm. It carries out the reaction IMP + L-aspartate + GTP = N(6)-(1,2-dicarboxyethyl)-AMP + GDP + phosphate + 2 H(+). It participates in purine metabolism; AMP biosynthesis via de novo pathway; AMP from IMP: step 1/2. Functionally, plays an important role in the de novo pathway of purine nucleotide biosynthesis. Catalyzes the first committed step in the biosynthesis of AMP from IMP. This Renibacterium salmoninarum (strain ATCC 33209 / DSM 20767 / JCM 11484 / NBRC 15589 / NCIMB 2235) protein is Adenylosuccinate synthetase.